A 352-amino-acid chain; its full sequence is Gap junction alpha-4 protein (352 aa).

Over 2-23 the chain is Cytoplasmic; that stretch reads GDWEFLEKLLDQVQEHSTSIGK. A helical membrane pass occupies residues 24 to 46; that stretch reads IWLMVLFIFRILILGLAGESVWG. Topologically, residues 47–76 are extracellular; that stretch reads DEQSDFICNTEQPGCTNVCYDKAFPISHVR. The chain crosses the membrane as a helical span at residues 77 to 99; the sequence is YWVLQFLFVSTPTLFYLGHVIYL. Residues 100-153 lie on the Cytoplasmic side of the membrane; sequence SRREEKLKQKESELRALDDKEQVEQAIAIIEKKKMKLYIQEDGTVKIKGALMCT. The chain crosses the membrane as a helical span at residues 154–176; the sequence is YLTSVIFKSLFEAGFLLGQWYLY. Residues 177–208 lie on the Extracellular side of the membrane; it reads GFVMTPIYVCERVPCPHKVDCFVSRPMEKTIF. A helical transmembrane segment spans residues 209–231; it reads IVFMLVVSLISLFLNVLELIHLV. Topologically, residues 232–352 are cytoplasmic; that stretch reads CKSMIDTLKK…SSSASKKQYV (121 aa). Residues 330-352 are disordered; the sequence is KTHSTMEKPSTRASSSASKKQYV. Residues 340-352 show a composition bias toward polar residues; the sequence is TRASSSASKKQYV.

It belongs to the connexin family. Alpha-type (group II) subfamily. In terms of assembly, a connexon is composed of a hexamer of connexins.

It is found in the cell membrane. The protein resides in the cell junction. Its subcellular location is the gap junction. One gap junction consists of a cluster of closely packed pairs of transmembrane channels, the connexons, through which materials of low MW diffuse from one cell to a neighboring cell. This chain is Gap junction alpha-4 protein (gja4), found in Xenopus tropicalis (Western clawed frog).